Reading from the N-terminus, the 405-residue chain is Mucosal addressin cell adhesion molecule 1 (405 aa).

Positions 1–21 (MESILALLLALALVPYQLSRG) are cleaved as a signal peptide. 2 consecutive Ig-like domains span residues 22 to 109 (QSFQ…ILVY) and 110 to 227 (AFPD…TSPK). Over 22–364 (QSFQVNPPES…PGQVTPNSSS (343 aa)) the chain is Extracellular. Intrachain disulfides connect C45–C91, C49–C95, and C132–C200. The tract at residues 221–257 (QSQTSPKPPNTTSAEPYILTSSSTAEAVSTGLNITTL) is mucin-like. Residues N230 and N253 are each glycosylated (N-linked (GlcNAc...) asparagine). Residues 255-275 (TTLPSAPPYPKLSPRTLSSEG) form a disordered region. An Ig-like 3 domain is found at 258–357 (PSAPPYPKLS…EVTNLYVPGQ (100 aa)). A disulfide bridge connects residues C293 and C341. An N-linked (GlcNAc...) asparagine glycan is attached at N361. The helical transmembrane segment at 365–385 (TVVLWIGSLVLGLLALVFLAY) threads the bilayer. The Cytoplasmic portion of the chain corresponds to 386–405 (RLWKCYRPGPRPDTSSCTHL).

As to quaternary structure, homodimer. In terms of processing, O-glycosylated; contains syalic acid. The Ser/Thr-rich mucin-like domain may provide possible sites for O-glycosylation. In terms of tissue distribution, highly expressed on high endothelial venules (HEV) of organized intestinal lymphoid tissues like the Peyer patches and mesenteric lymph nodes, and in the lamina propria of the intestine. Some expression found in the spleen, and low levels of expression in the peripheral lymph nodes and the lactating mammary gland. No expression was detected in the liver, kidneys, lungs or in normal brain. Expressed as well in brain endothelioma cells, and mucosal tissues which are in a chronic state of inflammation, such as inflamed pancreas.

It localises to the membrane. Cell adhesion leukocyte receptor expressed by mucosal venules, helps to direct lymphocyte traffic into mucosal tissues including the Peyer patches and the intestinal lamina propria. It can bind both the integrin alpha-4/beta-7 and L-selectin, regulating both the passage and retention of leukocytes. Both isoform 1 and isoform 2 can adhere to integrin alpha-4/beta-7. Isoform 2, lacking the mucin-like domain, may be specialized in supporting integrin alpha-4/beta-7-dependent adhesion strengthening, independent of L-selectin binding. The sequence is that of Mucosal addressin cell adhesion molecule 1 (Madcam1) from Mus musculus (Mouse).